The chain runs to 312 residues: Glycerol 2-dehydrogenase (NADP(+)) (312 aa).

Catalysis depends on Tyr56, which acts as the Proton donor. His112 serves as a coordination point for substrate. NADP(+) is bound at residue 220-274; sequence SPLGSTDAPLLKEPVILEIAKKNNVQPGHVVISWHVQRGYVVLPKSVNPDRIKTN. Position 306 is a phosphoserine (Ser306).

This sequence belongs to the aldo/keto reductase family.

Its subcellular location is the cytoplasm. The catalysed reaction is glycerol + NADP(+) = dihydroxyacetone + NADPH + H(+). Its function is as follows. Glycerol dehydrogenase involved in glycerol catabolism under microaerobic conditions. Has mRNA binding activity. The sequence is that of Glycerol 2-dehydrogenase (NADP(+)) (GCY1) from Saccharomyces cerevisiae (strain ATCC 204508 / S288c) (Baker's yeast).